The following is a 342-amino-acid chain: L-threonine 3-dehydrogenase (342 aa).

Cys-38 contributes to the Zn(2+) binding site. Catalysis depends on charge relay system residues Thr-40 and His-43. 6 residues coordinate Zn(2+): His-63, Glu-64, Cys-93, Cys-96, Cys-99, and Cys-107. NAD(+)-binding positions include Ile-175, Asp-195, Arg-200, 262-264 (LGI), and 286-287 (IY).

The protein belongs to the zinc-containing alcohol dehydrogenase family. As to quaternary structure, homotetramer. Requires Zn(2+) as cofactor.

Its subcellular location is the cytoplasm. It carries out the reaction L-threonine + NAD(+) = (2S)-2-amino-3-oxobutanoate + NADH + H(+). Its pathway is amino-acid degradation; L-threonine degradation via oxydo-reductase pathway; glycine from L-threonine: step 1/2. In terms of biological role, catalyzes the NAD(+)-dependent oxidation of L-threonine to 2-amino-3-ketobutyrate. The protein is L-threonine 3-dehydrogenase of Aeromonas hydrophila subsp. hydrophila (strain ATCC 7966 / DSM 30187 / BCRC 13018 / CCUG 14551 / JCM 1027 / KCTC 2358 / NCIMB 9240 / NCTC 8049).